Consider the following 310-residue polypeptide: N-acetyl-gamma-glutamyl-phosphate reductase (310 aa).

The active site involves cysteine 117.

The protein belongs to the NAGSA dehydrogenase family. Type 2 subfamily.

The protein resides in the cytoplasm. It carries out the reaction N-acetyl-L-glutamate 5-semialdehyde + phosphate + NADP(+) = N-acetyl-L-glutamyl 5-phosphate + NADPH + H(+). The protein operates within amino-acid biosynthesis; L-arginine biosynthesis; N(2)-acetyl-L-ornithine from L-glutamate: step 3/4. Catalyzes the NADPH-dependent reduction of N-acetyl-5-glutamyl phosphate to yield N-acetyl-L-glutamate 5-semialdehyde. This Rhizobium leguminosarum bv. trifolii (strain WSM2304) protein is N-acetyl-gamma-glutamyl-phosphate reductase.